A 156-amino-acid polypeptide reads, in one-letter code: Transcription elongation factor GreA (156 aa).

Positions 46 to 73 (AEYHAAREKQSFIEGRIKELEALLSLAE) form a coiled coil.

This sequence belongs to the GreA/GreB family.

In terms of biological role, necessary for efficient RNA polymerase transcription elongation past template-encoded arresting sites. The arresting sites in DNA have the property of trapping a certain fraction of elongating RNA polymerases that pass through, resulting in locked ternary complexes. Cleavage of the nascent transcript by cleavage factors such as GreA or GreB allows the resumption of elongation from the new 3'terminus. GreA releases sequences of 2 to 3 nucleotides. The polypeptide is Transcription elongation factor GreA (Cereibacter sphaeroides (strain ATCC 17025 / ATH 2.4.3) (Rhodobacter sphaeroides)).